Here is a 431-residue protein sequence, read N- to C-terminus: Trigger factor (431 aa).

One can recognise a PPIase FKBP-type domain in the interval 160–245 (DDRVTIDFVG…VKKVEVMVLP (86 aa)).

Belongs to the FKBP-type PPIase family. Tig subfamily.

It is found in the cytoplasm. It catalyses the reaction [protein]-peptidylproline (omega=180) = [protein]-peptidylproline (omega=0). In terms of biological role, involved in protein export. Acts as a chaperone by maintaining the newly synthesized protein in an open conformation. Functions as a peptidyl-prolyl cis-trans isomerase. The polypeptide is Trigger factor (Mannheimia succiniciproducens (strain KCTC 0769BP / MBEL55E)).